Consider the following 187-residue polypeptide: Early E3 20.6 kDa glycoprotein (187 aa).

Asparagine 30, asparagine 73, asparagine 117, asparagine 134, and asparagine 135 each carry an N-linked (GlcNAc...) asparagine; by host glycan.

The protein belongs to the adenoviridae E3_20 family.

This Human adenovirus B serotype 11 (strain Slobiski) (HAdV-11) protein is Early E3 20.6 kDa glycoprotein.